Consider the following 205-residue polypeptide: Protein N-terminal glutamine amidohydrolase (205 aa).

Active-site residues include Cys-20, His-74, and Asp-90.

This sequence belongs to the NTAQ1 family. Monomer.

It catalyses the reaction N-terminal L-glutaminyl-[protein] + H2O = N-terminal L-glutamyl-[protein] + NH4(+). Mediates the side-chain deamidation of N-terminal glutamine residues to glutamate, an important step in N-end rule pathway of protein degradation. Conversion of the resulting N-terminal glutamine to glutamate renders the protein susceptible to arginylation, polyubiquitination and degradation as specified by the N-end rule. Does not act on substrates with internal or C-terminal glutamine and does not act on non-glutamine residues in any position. This is Protein N-terminal glutamine amidohydrolase (tun) from Drosophila grimshawi (Hawaiian fruit fly).